The sequence spans 64 residues: Small ribosomal subunit protein bS21 (64 aa).

Belongs to the bacterial ribosomal protein bS21 family.

The chain is Small ribosomal subunit protein bS21 from Karelsulcia muelleri (strain GWSS) (Sulcia muelleri).